The chain runs to 354 residues: Holliday junction branch migration complex subunit RuvB (354 aa).

A large ATPase domain (RuvB-L) region spans residues 1–183 (MTGDNLVSAY…FGFVAHLDFY (183 aa)). ATP contacts are provided by residues arginine 23, glycine 64, lysine 67, threonine 68, serine 69, 130–132 (EDF), arginine 173, tyrosine 183, and arginine 220. Threonine 68 contributes to the Mg(2+) binding site. A small ATPAse domain (RuvB-S) region spans residues 184–254 (SPADLETLLH…AARAALLVYD (71 aa)). A head domain (RuvB-H) region spans residues 257-354 (ALGLDRLDRQ…DLFSVEPDQP (98 aa)). DNA is bound by residues arginine 312 and arginine 317. The tract at residues 330–354 (TPPNGIFGSDAPPASDLFSVEPDQP) is disordered.

The protein belongs to the RuvB family. As to quaternary structure, homohexamer. Forms an RuvA(8)-RuvB(12)-Holliday junction (HJ) complex. HJ DNA is sandwiched between 2 RuvA tetramers; dsDNA enters through RuvA and exits via RuvB. An RuvB hexamer assembles on each DNA strand where it exits the tetramer. Each RuvB hexamer is contacted by two RuvA subunits (via domain III) on 2 adjacent RuvB subunits; this complex drives branch migration. In the full resolvosome a probable DNA-RuvA(4)-RuvB(12)-RuvC(2) complex forms which resolves the HJ.

It localises to the cytoplasm. The enzyme catalyses ATP + H2O = ADP + phosphate + H(+). The RuvA-RuvB-RuvC complex processes Holliday junction (HJ) DNA during genetic recombination and DNA repair, while the RuvA-RuvB complex plays an important role in the rescue of blocked DNA replication forks via replication fork reversal (RFR). RuvA specifically binds to HJ cruciform DNA, conferring on it an open structure. The RuvB hexamer acts as an ATP-dependent pump, pulling dsDNA into and through the RuvAB complex. RuvB forms 2 homohexamers on either side of HJ DNA bound by 1 or 2 RuvA tetramers; 4 subunits per hexamer contact DNA at a time. Coordinated motions by a converter formed by DNA-disengaged RuvB subunits stimulates ATP hydrolysis and nucleotide exchange. Immobilization of the converter enables RuvB to convert the ATP-contained energy into a lever motion, pulling 2 nucleotides of DNA out of the RuvA tetramer per ATP hydrolyzed, thus driving DNA branch migration. The RuvB motors rotate together with the DNA substrate, which together with the progressing nucleotide cycle form the mechanistic basis for DNA recombination by continuous HJ branch migration. Branch migration allows RuvC to scan DNA until it finds its consensus sequence, where it cleaves and resolves cruciform DNA. The chain is Holliday junction branch migration complex subunit RuvB from Salinispora arenicola (strain CNS-205).